The following is a 110-amino-acid chain: Large ribosomal subunit protein uL24 (110 aa).

The protein belongs to the universal ribosomal protein uL24 family. As to quaternary structure, part of the 50S ribosomal subunit.

In terms of biological role, one of two assembly initiator proteins, it binds directly to the 5'-end of the 23S rRNA, where it nucleates assembly of the 50S subunit. Its function is as follows. One of the proteins that surrounds the polypeptide exit tunnel on the outside of the subunit. This is Large ribosomal subunit protein uL24 from Thermus thermophilus (strain ATCC BAA-163 / DSM 7039 / HB27).